The following is a 140-amino-acid chain: Large ribosomal subunit protein uL14 (140 aa).

Belongs to the universal ribosomal protein uL14 family. In terms of assembly, part of the 50S ribosomal subunit. Forms a cluster with proteins L3 and L24e, part of which may contact the 16S rRNA in 2 intersubunit bridges.

Its function is as follows. Binds to 23S rRNA. Forms part of two intersubunit bridges in the 70S ribosome. This is Large ribosomal subunit protein uL14 from Staphylothermus marinus (strain ATCC 43588 / DSM 3639 / JCM 9404 / F1).